Here is a 1260-residue protein sequence, read N- to C-terminus: ATP-dependent helicase/deoxyribonuclease subunit B (1260 aa).

The protein belongs to the helicase family. AddB/RexB type 2 subfamily. In terms of assembly, heterodimer of AddA and RexB. Mg(2+) serves as cofactor.

The heterodimer acts as both an ATP-dependent DNA helicase and an ATP-dependent, dual-direction single-stranded exonuclease. Recognizes the chi site generating a DNA molecule suitable for the initiation of homologous recombination. This subunit has 5' -&gt; 3' nuclease activity but not helicase activity. This chain is ATP-dependent helicase/deoxyribonuclease subunit B, found in Limosilactobacillus reuteri (strain DSM 20016) (Lactobacillus reuteri).